The primary structure comprises 390 residues: 3-ketoacyl-CoA thiolase (390 aa).

C95 (acyl-thioester intermediate) is an active-site residue. Active-site proton acceptor residues include H346 and C376.

This sequence belongs to the thiolase-like superfamily. Thiolase family. In terms of assembly, heterotetramer of two alpha chains (FadB) and two beta chains (FadA).

The protein resides in the cytoplasm. It catalyses the reaction an acyl-CoA + acetyl-CoA = a 3-oxoacyl-CoA + CoA. The protein operates within lipid metabolism; fatty acid beta-oxidation. In terms of biological role, catalyzes the final step of fatty acid oxidation in which acetyl-CoA is released and the CoA ester of a fatty acid two carbons shorter is formed. This is 3-ketoacyl-CoA thiolase from Psychrobacter arcticus (strain DSM 17307 / VKM B-2377 / 273-4).